The chain runs to 318 residues: Acetyl-coenzyme A carboxylase carboxyl transferase subunit alpha (318 aa).

In terms of domain architecture, CoA carboxyltransferase C-terminal spans 32-293 (NINEEIQRLE…REALREEWAR (262 aa)).

This sequence belongs to the AccA family. In terms of assembly, acetyl-CoA carboxylase is a heterohexamer composed of biotin carboxyl carrier protein (AccB), biotin carboxylase (AccC) and two subunits each of ACCase subunit alpha (AccA) and ACCase subunit beta (AccD).

The protein localises to the cytoplasm. It carries out the reaction N(6)-carboxybiotinyl-L-lysyl-[protein] + acetyl-CoA = N(6)-biotinyl-L-lysyl-[protein] + malonyl-CoA. It functions in the pathway lipid metabolism; malonyl-CoA biosynthesis; malonyl-CoA from acetyl-CoA: step 1/1. In terms of biological role, component of the acetyl coenzyme A carboxylase (ACC) complex. First, biotin carboxylase catalyzes the carboxylation of biotin on its carrier protein (BCCP) and then the CO(2) group is transferred by the carboxyltransferase to acetyl-CoA to form malonyl-CoA. This is Acetyl-coenzyme A carboxylase carboxyl transferase subunit alpha from Halorhodospira halophila (strain DSM 244 / SL1) (Ectothiorhodospira halophila (strain DSM 244 / SL1)).